A 476-amino-acid polypeptide reads, in one-letter code: NAC domain-containing protein 86 (476 aa).

The NAC domain occupies 6–157; that stretch reads LPPGFRFHPT…AYALCRVFKK (152 aa). The DNA-binding element occupies 105 to 163; it reads IGTKKTLVYYRGRAPHGIRTGWVMHEYRLDESECEPSAFGMQDAYALCRVFKKIVIEAK.

Expressed in a few sieve element cells before enucleation and in phloem-pole pericycle cells.

The protein resides in the nucleus. Transcription factor directing sieve element enucleation and cytosol degradation. Not required for formation of lytic vacuoles. Regulates, with NAC045, the transcription of NEN1, NEN2, NEN3, NEN4, RTM1, RTM2, UBP16, PLDZETA, ABCB10 and At1g26450. This chain is NAC domain-containing protein 86, found in Arabidopsis thaliana (Mouse-ear cress).